Here is a 265-residue protein sequence, read N- to C-terminus: Aquaporin-5 (265 aa).

Residues 1–12 (MKKEVCSVAFLK) lie on the Cytoplasmic side of the membrane. A helical membrane pass occupies residues 13–33 (AVFAEFLATLIFVFFGLGSAL). Over 34–39 (KWPSAL) the chain is Extracellular. The chain crosses the membrane as a helical span at residues 40 to 60 (PTILQIALAFGLAIGTLAQAL). Residues 61–65 (GPVSG) lie on the Cytoplasmic side of the membrane. Positions 66–74 (GHINPAITL) form an intramembrane region, discontinuously helical. An NPA 1 motif is present at residues 69 to 71 (NPA). Residues 75–87 (ALLVGNQISLLRA) are Cytoplasmic-facing. The chain crosses the membrane as a helical span at residues 88 to 108 (FFYVAAQLVGAIAGAGILYGV). The Extracellular portion of the chain corresponds to 109-126 (APLNARGNLAVNALNNNT). N124 and N125 each carry an N-linked (GlcNAc...) asparagine glycan. The helical transmembrane segment at 127–147 (TQGQAMVVELILTFQLALCIF) threads the bilayer. Topologically, residues 148–158 (ASTDSRRTSPV) are cytoplasmic. The helical transmembrane segment at 159–179 (GSPALSIGLSVTLGHLVGIYF) threads the bilayer. Position 180 (T180) is a topological domain, extracellular. The discontinuously helical intramembrane region spans 181–191 (GCSMNPARSFG). The short motif at 185 to 187 (NPA) is the NPA 2 element. The Extracellular segment spans residues 192–203 (PAVVMNRFSPAH). Residues 204-224 (WVFWVGPIVGAVLAAILYFYL) traverse the membrane as a helical segment. The Cytoplasmic portion of the chain corresponds to 225-265 (LFPNSLSLSERVAIIKGTYEPDEDWEEQREERKKTMELTTR).

Belongs to the MIP/aquaporin (TC 1.A.8) family. Homotetramer; each monomer provides an independent water pore. Interacts with TRPV4; the interaction is probably indirect and regulates TRPV4 activation by hypotonicity. Detected in skin eccrine sweat glands, at the apical cell membrane and at intercellular canaliculi (at protein level).

The protein resides in the apical cell membrane. It is found in the cell membrane. Its subcellular location is the cytoplasmic vesicle membrane. It catalyses the reaction H2O(in) = H2O(out). Aquaporins form homotetrameric transmembrane channels, with each monomer independently mediating water transport across the plasma membrane along its osmotic gradient. Plays an important role in fluid secretion in salivary glands. Required for TRPV4 activation by hypotonicity. Together with TRPV4, controls regulatory volume decrease in salivary epithelial cells. Seems to play a redundant role in water transport in the eye, lung and in sweat glands. The protein is Aquaporin-5 of Homo sapiens (Human).